Here is a 314-residue protein sequence, read N- to C-terminus: Protein ATP1B4 (314 aa).

Residues 1–17 (MATTAGEQANYLQSADS) are compositionally biased toward polar residues. Residues 1–37 (MATTAGEQANYLQSADSMSDGRQHHPEEAGEKKQEEQ) are disordered. Over 1–69 (MATTAGEQAN…VLGRDKKSWA (69 aa)) the chain is Cytoplasmic. The span at 19 to 37 (SDGRQHHPEEAGEKKQEEQ) shows a compositional bias: basic and acidic residues. The chain crosses the membrane as a helical span at residues 70–90 (LILLFYFILYCFLAGLFALCI). Residues 91 to 314 (YGLLATISPY…GRVAFTLHIG (224 aa)) lie on the Extracellular side of the membrane. A disulfide bridge links Cys-160 with Cys-179. Asn-188 carries an N-linked (GlcNAc...) asparagine glycan. 2 cysteine pairs are disulfide-bonded: Cys-189/Cys-205 and Cys-228/Cys-287. Asn-264 is a glycosylation site (N-linked (GlcNAc...) asparagine).

The protein belongs to the X(+)/potassium ATPases subunit beta family. Composed of two subunits: alpha (catalytic) and beta (accessory). Glycosylated. In terms of tissue distribution, expressed in skeletal muscle, liver, lung, kidney, heart, brain and skin.

It is found in the membrane. Its function is as follows. This is the non-catalytic component of the active enzyme, which catalyzes the hydrolysis of ATP coupled with the exchange of Na(+) and K(+) ions across the plasma membrane. The sequence is that of Protein ATP1B4 (atp1b4) from Xenopus laevis (African clawed frog).